The sequence spans 290 residues: Bifunctional protein FolD (290 aa).

NADP(+)-binding positions include 164-166, Ser-193, and Ile-234; that span reads GRS.

The protein belongs to the tetrahydrofolate dehydrogenase/cyclohydrolase family. As to quaternary structure, homodimer.

The enzyme catalyses (6R)-5,10-methylene-5,6,7,8-tetrahydrofolate + NADP(+) = (6R)-5,10-methenyltetrahydrofolate + NADPH. It carries out the reaction (6R)-5,10-methenyltetrahydrofolate + H2O = (6R)-10-formyltetrahydrofolate + H(+). The protein operates within one-carbon metabolism; tetrahydrofolate interconversion. Its function is as follows. Catalyzes the oxidation of 5,10-methylenetetrahydrofolate to 5,10-methenyltetrahydrofolate and then the hydrolysis of 5,10-methenyltetrahydrofolate to 10-formyltetrahydrofolate. The protein is Bifunctional protein FolD of Cytophaga hutchinsonii (strain ATCC 33406 / DSM 1761 / CIP 103989 / NBRC 15051 / NCIMB 9469 / D465).